The chain runs to 205 residues: COMM domain-containing protein 5 (205 aa).

The COMM domain occupies 130–194 (QLSSFKWRVD…KLLKDLEDLE (65 aa)).

This sequence belongs to the COMM domain-containing protein 5 family. Component of the commander complex consisting of the CCC subcomplex and the retriever subcomplex. Component of the CCC subcomplex.

In terms of biological role, scaffold protein in the commander complex that is essential for endosomal recycling of transmembrane cargos; the commander complex is composed of the CCC subcomplex and the retriever subcomplex. This is COMM domain-containing protein 5 (commd5) from Dictyostelium discoideum (Social amoeba).